We begin with the raw amino-acid sequence, 300 residues long: Ribosomal RNA small subunit methyltransferase H (300 aa).

Residues 36–38, Asp55, Leu89, Asp103, and Gln110 contribute to the S-adenosyl-L-methionine site; that span reads GGH.

The protein belongs to the methyltransferase superfamily. RsmH family.

The protein localises to the cytoplasm. It carries out the reaction cytidine(1402) in 16S rRNA + S-adenosyl-L-methionine = N(4)-methylcytidine(1402) in 16S rRNA + S-adenosyl-L-homocysteine + H(+). In terms of biological role, specifically methylates the N4 position of cytidine in position 1402 (C1402) of 16S rRNA. The protein is Ribosomal RNA small subunit methyltransferase H of Thermotoga neapolitana (strain ATCC 49049 / DSM 4359 / NBRC 107923 / NS-E).